Reading from the N-terminus, the 571-residue chain is Urease subunit alpha (571 aa).

The region spanning 133–571 is the Urease domain; the sequence is GGVDSHIHFI…LPLAQRYFLF (439 aa). Ni(2+) contacts are provided by histidine 138, histidine 140, and lysine 221. Lysine 221 carries the post-translational modification N6-carboxylysine. Histidine 223 is a binding site for substrate. The Ni(2+) site is built by histidine 250 and histidine 276. Histidine 324 (proton donor) is an active-site residue. Aspartate 364 serves as a coordination point for Ni(2+).

It belongs to the metallo-dependent hydrolases superfamily. Urease alpha subunit family. As to quaternary structure, heterotrimer of UreA (gamma), UreB (beta) and UreC (alpha) subunits. Three heterotrimers associate to form the active enzyme. Requires Ni cation as cofactor. Post-translationally, carboxylation allows a single lysine to coordinate two nickel ions.

Its subcellular location is the cytoplasm. The enzyme catalyses urea + 2 H2O + H(+) = hydrogencarbonate + 2 NH4(+). Its pathway is nitrogen metabolism; urea degradation; CO(2) and NH(3) from urea (urease route): step 1/1. The sequence is that of Urease subunit alpha from Anaeromyxobacter sp. (strain Fw109-5).